The primary structure comprises 212 residues: ATP phosphoribosyltransferase (212 aa).

This sequence belongs to the ATP phosphoribosyltransferase family. Short subfamily. In terms of assembly, heteromultimer composed of HisG and HisZ subunits.

It localises to the cytoplasm. It carries out the reaction 1-(5-phospho-beta-D-ribosyl)-ATP + diphosphate = 5-phospho-alpha-D-ribose 1-diphosphate + ATP. It functions in the pathway amino-acid biosynthesis; L-histidine biosynthesis; L-histidine from 5-phospho-alpha-D-ribose 1-diphosphate: step 1/9. Functionally, catalyzes the condensation of ATP and 5-phosphoribose 1-diphosphate to form N'-(5'-phosphoribosyl)-ATP (PR-ATP). Has a crucial role in the pathway because the rate of histidine biosynthesis seems to be controlled primarily by regulation of HisG enzymatic activity. This is ATP phosphoribosyltransferase from Clostridium botulinum (strain Langeland / NCTC 10281 / Type F).